The sequence spans 543 residues: Sodium/glucose cotransporter (543 aa).

Helical transmembrane passes span 10–30 (FIDIMVFAIYVAIIIGVGLWV), 45–65 (FLAGKSLPWWAVGASLIAANI), 79–99 (SIGLAIASYEWMSAITLIIVG), 129–149 (ILAVFWISLYIFVNLTSVLYL), 156–176 (TILGIPLMYSILGLALFALVY), 193–213 (VFFLVLGGFMTTYMAVSFIGG), 246–266 (LPGIAVLIGGLWVANLYYWGF), 287–307 (IVFAAFLKLIVPFLVVLPGIA), 345–365 (FLPVGVKGVVFAALAAAIVSS), 401–421 (TAAVVALIIACLIAPMLGGIG), 427–447 (IQEYTGLVSPGILAVFLLGLF), 455–475 (GAIIGVVASIPFALFLKFMPL), 483–503 (MLYTLLFTMVVIAFTSLSTSI), and 523–543 (SFNIAAYGIMIVLAVLYTLFW).

The protein localises to the cell membrane. Actively transports glucose into cells by Na(+) cotransport. The chain is Sodium/glucose cotransporter (sglT) from Vibrio parahaemolyticus.